Here is a 321-residue protein sequence, read N- to C-terminus: Protein ABIL3 (321 aa).

Disordered regions lie at residues 179-273 (TIRE…RSAS) and 279-298 (EKEA…SKRL). Composition is skewed to low complexity over residues 204–215 (SATFSFSSIATA) and 240–255 (IRPS…SKSR). Residues 279-288 (EKEAQKEPEH) show a composition bias toward basic and acidic residues.

It belongs to the ABI family. In terms of assembly, binds SCAR.

It localises to the cytoplasm. Its subcellular location is the cytoskeleton. In terms of biological role, involved in regulation of actin and microtubule organization. Part of a WAVE complex that activates the Arp2/3 complex. In Arabidopsis thaliana (Mouse-ear cress), this protein is Protein ABIL3 (ABIL3).